We begin with the raw amino-acid sequence, 311 residues long: Probable manganese-dependent inorganic pyrophosphatase (311 aa).

Positions 9, 13, 15, 75, 97, and 149 each coordinate Mn(2+).

The protein belongs to the PPase class C family. It depends on Mn(2+) as a cofactor.

It is found in the cytoplasm. The catalysed reaction is diphosphate + H2O = 2 phosphate + H(+). This Shouchella clausii (strain KSM-K16) (Alkalihalobacillus clausii) protein is Probable manganese-dependent inorganic pyrophosphatase.